A 633-amino-acid chain; its full sequence is Glutamyl-tRNA(Gln) amidotransferase subunit E (633 aa).

The disordered stretch occupies residues 415 to 437; sequence LDDGTTKFLRPQPGSARMYPETD.

The protein belongs to the GatB/GatE family. GatE subfamily. As to quaternary structure, heterodimer of GatD and GatE.

The catalysed reaction is L-glutamyl-tRNA(Gln) + L-glutamine + ATP + H2O = L-glutaminyl-tRNA(Gln) + L-glutamate + ADP + phosphate + H(+). Its function is as follows. Allows the formation of correctly charged Gln-tRNA(Gln) through the transamidation of misacylated Glu-tRNA(Gln) in organisms which lack glutaminyl-tRNA synthetase. The reaction takes place in the presence of glutamine and ATP through an activated gamma-phospho-Glu-tRNA(Gln). The GatDE system is specific for glutamate and does not act on aspartate. This is Glutamyl-tRNA(Gln) amidotransferase subunit E from Saccharolobus solfataricus (strain ATCC 35092 / DSM 1617 / JCM 11322 / P2) (Sulfolobus solfataricus).